A 339-amino-acid polypeptide reads, in one-letter code: 5-dehydro-2-deoxygluconokinase (339 aa).

The protein belongs to the carbohydrate kinase PfkB family.

It carries out the reaction 5-dehydro-2-deoxy-D-gluconate + ATP = 6-phospho-5-dehydro-2-deoxy-D-gluconate + ADP + H(+). It participates in polyol metabolism; myo-inositol degradation into acetyl-CoA; acetyl-CoA from myo-inositol: step 5/7. Functionally, catalyzes the phosphorylation of 5-dehydro-2-deoxy-D-gluconate (2-deoxy-5-keto-D-gluconate or DKG) to 6-phospho-5-dehydro-2-deoxy-D-gluconate (DKGP). The polypeptide is 5-dehydro-2-deoxygluconokinase (Clostridium beijerinckii (strain ATCC 51743 / NCIMB 8052) (Clostridium acetobutylicum)).